Here is a 191-residue protein sequence, read N- to C-terminus: 3-isopropylmalate dehydratase small subunit (191 aa).

The protein belongs to the LeuD family. LeuD type 1 subfamily. Heterodimer of LeuC and LeuD.

The enzyme catalyses (2R,3S)-3-isopropylmalate = (2S)-2-isopropylmalate. It functions in the pathway amino-acid biosynthesis; L-leucine biosynthesis; L-leucine from 3-methyl-2-oxobutanoate: step 2/4. Catalyzes the isomerization between 2-isopropylmalate and 3-isopropylmalate, via the formation of 2-isopropylmaleate. In Anaeromyxobacter dehalogenans (strain 2CP-C), this protein is 3-isopropylmalate dehydratase small subunit.